The chain runs to 174 residues: 2-C-methyl-D-erythritol 2,4-cyclodiphosphate synthase (174 aa).

A divalent metal cation is bound by residues Asp-13, His-15, and His-61. 13–15 (DAH) contacts 4-CDP-2-C-methyl-D-erythritol 2-phosphate. Residues 75-77 (DIG), 149-152 (TTTD), Phe-156, and Arg-159 each bind 4-CDP-2-C-methyl-D-erythritol 2-phosphate.

Belongs to the IspF family. In terms of assembly, homotrimer. Requires a divalent metal cation as cofactor.

The catalysed reaction is 4-CDP-2-C-methyl-D-erythritol 2-phosphate = 2-C-methyl-D-erythritol 2,4-cyclic diphosphate + CMP. It functions in the pathway isoprenoid biosynthesis; isopentenyl diphosphate biosynthesis via DXP pathway; isopentenyl diphosphate from 1-deoxy-D-xylulose 5-phosphate: step 4/6. Functionally, involved in the biosynthesis of isopentenyl diphosphate (IPP) and dimethylallyl diphosphate (DMAPP), two major building blocks of isoprenoid compounds. Catalyzes the conversion of 4-diphosphocytidyl-2-C-methyl-D-erythritol 2-phosphate (CDP-ME2P) to 2-C-methyl-D-erythritol 2,4-cyclodiphosphate (ME-CPP) with a corresponding release of cytidine 5-monophosphate (CMP). This chain is 2-C-methyl-D-erythritol 2,4-cyclodiphosphate synthase, found in Bifidobacterium longum subsp. infantis (strain ATCC 15697 / DSM 20088 / JCM 1222 / NCTC 11817 / S12).